The sequence spans 126 residues: Anti-adapter protein IraD (126 aa).

It belongs to the GpW/Gp25 family. IraD subfamily. As to quaternary structure, interacts with RssB.

It localises to the cytoplasm. Its function is as follows. Inhibits RpoS proteolysis by regulating RssB activity, thereby increasing the stability of the sigma stress factor RpoS during oxidative stress. Its effect on RpoS stability is due to its interaction with RssB, which probably blocks the interaction of RssB with RpoS, and the consequent delivery of the RssB-RpoS complex to the ClpXP protein degradation pathway. In Salmonella choleraesuis (strain SC-B67), this protein is Anti-adapter protein IraD.